We begin with the raw amino-acid sequence, 364 residues long: FNIP repeat-containing protein DDB_G0277323 (364 aa).

5 FNIP repeats span residues 57–98 (MNIE…DLKY), 155–198 (YDCL…FGWT), 214–244 (LRVLKFGVSFNTEIQCNVLPNSIEKITFGSS), 245–271 (FNQVILPNSLPRNLRILKFGSSFNQPI), and 295–340 (FNQP…FINN).

The sequence is that of FNIP repeat-containing protein DDB_G0277323 from Dictyostelium discoideum (Social amoeba).